Consider the following 205-residue polypeptide: MSQIILASASPRRKELLEQIGAEFVVCPAKGEEIITEEEPSAVVMELSRQKAEEVASGVLTYNEQHAELVTPQDILVIGADTVVAYENQILGKPKDEEDARRMLSMLSGKTHSVYTGVTFVFIDKAGRTGEHCFYEKTDVSMYKLTEEEIDRYISSGDPMDKAGSYGIQGRFAIHIKGIHGDYNNVVGLPVARLYQELRKLGVDV.

The Proton acceptor role is filled by aspartate 81.

It belongs to the Maf family. YhdE subfamily. A divalent metal cation is required as a cofactor.

It localises to the cytoplasm. The enzyme catalyses dTTP + H2O = dTMP + diphosphate + H(+). The catalysed reaction is UTP + H2O = UMP + diphosphate + H(+). In terms of biological role, nucleoside triphosphate pyrophosphatase that hydrolyzes dTTP and UTP. May have a dual role in cell division arrest and in preventing the incorporation of modified nucleotides into cellular nucleic acids. The polypeptide is dTTP/UTP pyrophosphatase (Agathobacter rectalis (strain ATCC 33656 / DSM 3377 / JCM 17463 / KCTC 5835 / VPI 0990) (Eubacterium rectale)).